Consider the following 957-residue polypeptide: MTTPLKPLDDAATSFARRHIGPSPRDVAAMLETVGAKSVAELMAQTLPGTIRQATPLTLEPALSEVEAIGHMRALAAQNQVFTSLIGQGYSGTIMPAVIQRNILENPAWYTAYTPYQPEISQGRLEALFNFQTMICDLTGLDVANASLLDEGTAAAEAMALAERSARAKTKAFFVDRNVHPQTLAVLRTRAEPLGWQLIVGDPVKDLDGAEVFGGLLQYPETTGALRDPRADIAKLHDKGALAILAADLLALTVIASPGELGADIAIGSAQRFGVPMGYGGPHAAYMAVRDALKRSLPGRIVGLSVDSRGAPAYRLALQTREQHIRREKATSNICTAQVLLAVIAAMYAVYHGPDGLKSIARTVHRRAAVLAAGLRKLGFAPASDSFFDTVLVEAGANCDEIIARAESQRINLGRDGSRLRIALDETTTADVVEAVWRAFGGELSYAAIEAEARDAVPAELKRQRPFLTHPVFHAHRSETEMLRYLRKLADRDLALDRAMIPLGSCTMKLNATTEMIPLTWPEFSSLHPFVPRAQAAGYHTMFADLQDWLCRISGYDAVSLQPNSGAQGEYAGLLAIRGYHAARGEGHRTICLIPSSAHGTNPASAHMVGMEVVVVGCDSNGNVDLADLKAKAELHSAKLAAIMITYPSTHGVFEEHIRDICDIVHAHGGQVYLDGANLNAQVGLSRPGDYGADVSHFNLHKTFCIPHGGGGPGMGPIGVKAHLAPFLPGHPATDAATPSPVGPVSAAPYGSASILTISYIYMLLMGGEGLTRATEIAILNANYVAARLDPHFPVLYRNERGRVAHECIIDPRPLKQTCGVTVDDIAKRLIDYGFHAPTMSFPVAGTLMIEPTESESKAELDRFCDAMIAIRKEIAAVEQGRFTIEASPLRHAPHTVHDIADDDWNRVYRRSEGCFPEGTSRTDKYWCPVGRVDNVYGDRNLVCSCPPIGDYAQAAE.

Lys702 bears the N6-(pyridoxal phosphate)lysine mark.

This sequence belongs to the GcvP family. As to quaternary structure, the glycine cleavage system is composed of four proteins: P, T, L and H. Pyridoxal 5'-phosphate is required as a cofactor.

The catalysed reaction is N(6)-[(R)-lipoyl]-L-lysyl-[glycine-cleavage complex H protein] + glycine + H(+) = N(6)-[(R)-S(8)-aminomethyldihydrolipoyl]-L-lysyl-[glycine-cleavage complex H protein] + CO2. Functionally, the glycine cleavage system catalyzes the degradation of glycine. The P protein binds the alpha-amino group of glycine through its pyridoxal phosphate cofactor; CO(2) is released and the remaining methylamine moiety is then transferred to the lipoamide cofactor of the H protein. The sequence is that of Glycine dehydrogenase (decarboxylating) from Bradyrhizobium sp. (strain BTAi1 / ATCC BAA-1182).